A 315-amino-acid chain; its full sequence is Methionyl-tRNA formyltransferase (315 aa).

113 to 116 (SLLP) is a (6S)-5,6,7,8-tetrahydrofolate binding site.

This sequence belongs to the Fmt family.

It carries out the reaction L-methionyl-tRNA(fMet) + (6R)-10-formyltetrahydrofolate = N-formyl-L-methionyl-tRNA(fMet) + (6S)-5,6,7,8-tetrahydrofolate + H(+). Its function is as follows. Attaches a formyl group to the free amino group of methionyl-tRNA(fMet). The formyl group appears to play a dual role in the initiator identity of N-formylmethionyl-tRNA by promoting its recognition by IF2 and preventing the misappropriation of this tRNA by the elongation apparatus. This Escherichia coli O45:K1 (strain S88 / ExPEC) protein is Methionyl-tRNA formyltransferase.